A 253-amino-acid chain; its full sequence is Indole-3-glycerol phosphate synthase (253 aa).

The protein belongs to the TrpC family.

It carries out the reaction 1-(2-carboxyphenylamino)-1-deoxy-D-ribulose 5-phosphate + H(+) = (1S,2R)-1-C-(indol-3-yl)glycerol 3-phosphate + CO2 + H2O. Its pathway is amino-acid biosynthesis; L-tryptophan biosynthesis; L-tryptophan from chorismate: step 4/5. This Bacillus cereus (strain B4264) protein is Indole-3-glycerol phosphate synthase.